A 1939-amino-acid chain; its full sequence is Myosin-6 (1939 aa).

Residues 32–81 form the Myosin N-terminal SH3-like domain; sequence DIRTECFVPDDKEEFVKAKIVSREGGKVTAETENGKTVTVKEDQVMQQNP. The 696-residue stretch at 85–780 folds into the Myosin motor domain; sequence DKIEDMAMLT…LLGLLEEMRD (696 aa). The residue at position 129 (Lys129) is an N6,N6,N6-trimethyllysine. 178–185 serves as a coordination point for ATP; it reads GESGAGKT. Phosphothreonine is present on Thr379. Ser417 carries the phosphoserine modification. Actin-binding stretches follow at residues 657–679 and 759–773; these read LNKL…IPNE and KFGH…GLLG. In terms of domain architecture, IQ spans 783-812; that stretch reads LSRIITRIQAQARGQLMRIEFKKMVERRDA. A coiled-coil region spans residues 842 to 1939; it reads LKSAETEKEM…GAKQKMHDEE (1098 aa). Ser1090 and Ser1139 each carry phosphoserine. Tyr1261 is modified (phosphotyrosine). Residue Ser1271 is modified to Phosphoserine. Phosphothreonine occurs at positions 1277 and 1284. Position 1309 is a phosphoserine (Ser1309). Tyr1310 bears the Phosphotyrosine mark. Thr1311 bears the Phosphothreonine mark. Ser1512 bears the Phosphoserine mark. A phosphothreonine mark is found at Thr1515 and Thr1681. The disordered stretch occupies residues 1908–1939; sequence AEERADIAESQVNKLRAKSRDIGAKQKMHDEE. Residues 1925-1939 are compositionally biased toward basic and acidic residues; that stretch reads KSRDIGAKQKMHDEE.

It belongs to the TRAFAC class myosin-kinesin ATPase superfamily. Myosin family. Muscle myosin is a hexameric protein that consists of 2 heavy chain subunits (MHC), 2 alkali light chain subunits (MLC) and 2 regulatory light chain subunits (MLC-2).

It is found in the cytoplasm. The protein resides in the myofibril. Muscle contraction. The polypeptide is Myosin-6 (MYH6) (Mesocricetus auratus (Golden hamster)).